Here is a 581-residue protein sequence, read N- to C-terminus: Intermediate filament protein ifa-2 (581 aa).

Disordered regions lie at residues 1–35 (MTDP…GSGN) and 47–68 (SSVS…RDNR). The segment at 1-74 (MTDPDSYRSS…RDNREREKKE (74 aa)) is head. The span at 7–28 (YRSSITSRPSFNRTVTSSSQNY) shows a compositional bias: polar residues. In terms of domain architecture, IF rod spans 71–424 (EKKEIMELND…QMLEGNSEGN (354 aa)). The tract at residues 75–106 (IMELNDRLASYIEKVRFLDAQNRKLDADLKML) is coil 1A. The interval 107 to 120 (QGRFGKSTGSVKVM) is linker 1. The segment at 121 to 258 (YEMEITTATN…RGFETELKEL (138 aa)) is coil 1B. Positions 259–276 (QAQAARDTTSENREYFKN) are linker 12. A coil 2 region spans residues 277–424 (ELANAMRDIR…QMLEGNSEGN (148 aa)). The interval 425 to 578 (GLRQLVEKVV…THIQRQSQQT (154 aa)) is tail. The segment at 449–469 (RVVKGEHSSRTSYQRSAKGNV) is disordered. The LTD domain occupies 457–574 (SRTSYQRSAK…EERATHIQRQ (118 aa)).

It belongs to the intermediate filament family. As to quaternary structure, forms some heteromeric filaments with ifb-1. In terms of tissue distribution, mainly expressed in regions of the hypodermis adjacent to muscle. Expressed in longitudinal stripes where the mechanosensory neurons interface with the hypodermis. Also expressed to the uterine seam and within the uterine-vulval cells.

It localises to the cell junction. The protein resides in the hemidesmosome. Functionally, cytoplasmic intermediate filaments provide mechanical strength to cells. Essential protein, involved in attachment structures in epidermal cells that connect muscles to the external cuticle. Probably acts by forming hypodermal hemidesmosome complexes that help mediate muscle-cuticle force transduction. Although expressed during embryogenesis, it is not required for embryonic development of muscle-cuticle linkages nor for the localization of other proteins to the hemidesmosomes in embryos. This Caenorhabditis elegans protein is Intermediate filament protein ifa-2.